Here is a 389-residue protein sequence, read N- to C-terminus: Major outer membrane porin (389 aa).

Positions 1–23 (MKKLLKSALLSAAFAGSVGSLQA) are cleaved as a signal peptide.

This sequence belongs to the chlamydial porin (CP) (TC 1.B.2) family. In terms of assembly, part of a disulfide cross-linked outer membrane complex (COMC) composed of the major outer membrane porin (MOMP), the small cysteine-rich protein (OmcA) and the large cysteine-rich periplasmic protein (OmcB).

The protein localises to the cell outer membrane. Its function is as follows. In elementary bodies (EBs, the infectious stage, which is able to survive outside the host cell) provides the structural integrity of the outer envelope through disulfide cross-links with the small cysteine-rich protein and the large cysteine-rich periplasmic protein. It has been described in publications as the Sarkosyl-insoluble COMC (Chlamydia outer membrane complex), and serves as the functional equivalent of peptidoglycan. Permits diffusion of specific solutes through the outer membrane. The polypeptide is Major outer membrane porin (ompA) (Chlamydia pneumoniae (Chlamydophila pneumoniae)).